An 890-amino-acid chain; its full sequence is MATQIDASSEAAAATAAAQHTPMMQQYLRIKSEHPDTLVFYRMGDFYELFFEDAEKAARLLDLTLTQRGASAGTPIKMAGVPHHAVEQYLAKLVKFGESAAICEQIGDPATSKGPVERKVVRVVTPGTLTDAALLSDKSDVFLLALCVGHNKRGVASNIGLAWLNLASGALRLAELAPDQLGAALERIRPAEILAADGTIESVPAGMGAITRVPAWHFDIASGTQRLCDQLEVASLDGFGAQALTSANGAAGALLIYAAATQGQQLRHVRSLKVENESEYIGLDPSTRRNLELTETLRGTESPTLYSLLDTCCTAMGSRLLRHWLHHPPRASVAAQARHQAIGALLDAPPNAGLDSLRSALRQIADVERITGRLALLSARPRDLSSLRDTFAALPALRERVAEIASNAAALGRLEAALEPPPGCLDLLTRAIAAEPAAMVRDGGVIARGYDAELDELRDISENCGQFLIDLETRERARTGISNLRVEYNKVHGFYIEVTRGQTDKVPDDYRRRQTLKNAERYITPELKTFEDKALSAQERALARERALYDGVLQALLPHIEGCQRVASGLAELDLLAAFAERARTLDWVAPEFTDEIGIEIDQGRHPVVEAQVEQFIANDCALNPERKLLLITGPNMGGKSTFMRQTALIALMAYVGSYVPAKAARFGPIDRIFTRIGAADDLAGGRSTFMVEMTEAAAILNDATPHSLVLMDEIGRGTSTFDGLALAWAIARHLLSHNRCYTLFATHYFELTQLPAEFPQAANVHLSAVEHGHGIVFLHAVEEGPANQSYGLQVAQLAGVPAPVIRAARKHLAHLEQQSAAQATPQLDLFAAPPVVDEPECNEPPAATPHPALERLLELDPDDLKPRDALDLLYELHTLARSGPADAQR.

Residue 634 to 641 coordinates ATP; it reads GPNMGGKS.

This sequence belongs to the DNA mismatch repair MutS family.

Its function is as follows. This protein is involved in the repair of mismatches in DNA. It is possible that it carries out the mismatch recognition step. This protein has a weak ATPase activity. In Burkholderia pseudomallei (strain K96243), this protein is DNA mismatch repair protein MutS.